Consider the following 312-residue polypeptide: Methionyl-tRNA formyltransferase (312 aa).

Position 110–113 (110–113) interacts with (6S)-5,6,7,8-tetrahydrofolate; sequence SLLP.

It belongs to the Fmt family.

It carries out the reaction L-methionyl-tRNA(fMet) + (6R)-10-formyltetrahydrofolate = N-formyl-L-methionyl-tRNA(fMet) + (6S)-5,6,7,8-tetrahydrofolate + H(+). In terms of biological role, attaches a formyl group to the free amino group of methionyl-tRNA(fMet). The formyl group appears to play a dual role in the initiator identity of N-formylmethionyl-tRNA by promoting its recognition by IF2 and preventing the misappropriation of this tRNA by the elongation apparatus. The chain is Methionyl-tRNA formyltransferase from Mycobacterium ulcerans (strain Agy99).